A 280-amino-acid polypeptide reads, in one-letter code: MSRYDDLFARLDTAGEGAFVPFIMLSDPSPEEAFQIISTAIEAGADALELGVPFSDPVADGPTVAESHLRALDGGATVDSALEQIKRVRAAYPEVPIGMLIYGNVPFTRGLDRFYQEFAEAGADSILLPDVPVREGAPFSAAAAAAGIDPIYIAPANASEKTLEGVSAASKGYIYAISRDGVTGTERESSTDGLSAVVDNIKKFDGAPIFLGFGISSPQHVADAIAAGASGAITGSAITKIIASHCEGEHPNPSTIRDMDGLKKDLTEFISAMKAATKKV.

Active-site proton acceptor residues include E49 and D60.

The protein belongs to the TrpA family. Tetramer of two alpha and two beta chains.

It carries out the reaction (1S,2R)-1-C-(indol-3-yl)glycerol 3-phosphate + L-serine = D-glyceraldehyde 3-phosphate + L-tryptophan + H2O. It functions in the pathway amino-acid biosynthesis; L-tryptophan biosynthesis; L-tryptophan from chorismate: step 5/5. The alpha subunit is responsible for the aldol cleavage of indoleglycerol phosphate to indole and glyceraldehyde 3-phosphate. In Corynebacterium glutamicum (strain R), this protein is Tryptophan synthase alpha chain.